The primary structure comprises 592 residues: Peroxisomal targeting signal receptor (592 aa).

C10 participates in a covalent cross-link: Glycyl cysteine thioester (Cys-Gly) (interchain with G-Cter in ubiquitin). Residues 11–33 (SVNGNAVAQFNKHTQQDRSLQQQ) form an amphipathic helix 1 (AH1) region. K22 is covalently cross-linked (Glycyl lysine isopeptide (Lys-Gly) (interchain with G-Cter in ubiquitin)). Polar residues predominate over residues 22 to 46 (KHTQQDRSLQQQVANQHGNVAQNQG). The tract at residues 22-49 (KHTQQDRSLQQQVANQHGNVAQNQGFKK) is disordered. The interval 58 to 76 (RANLDQFMNNGAPQNSFQF) is amphipathic helix 2 (AH2). Short sequence motifs (wxxxF/Y motif) lie at residues 100–104 (WSQDF), 128–132 (WASEF), and 185–189 (WENQF). The segment at 223–239 (FQEVWDSLNSESFENDF) is amphipathic helix 4 (AH4). Residues 262–266 (WEKDF) carry the WxxxF/Y motif 4 motif. TPR repeat units lie at residues 295–329 (DQDPYEIGLQLMENGAKLSEAALAFEAAIQRDENH), 330–363 (VDAWLKLGEVQTQNEKEIAGISALEKCLELHPEN), 440–473 (ADVQMGLGVLFYANEEFDKTIDCFKAALSIRPDD), 475–507 (ILWNRLGASLANSNRSEEAVDAYFKALQLKPTF), and 509–541 (RARYNLGVSCINIGCYKEAAEHLLSGLSMHQVE).

The protein belongs to the peroxisomal targeting signal receptor family. As to quaternary structure, interacts (via WxxxF/Y and LVxEF motifs) with PEX14; promoting translocation through the PEX13-PEX14 docking complex. In terms of processing, monoubiquitinated at Cys-10 by PEX2 during PEX5 passage through the retrotranslocation channel: monoubiquitination acts as a signal for PEX5 extraction and is required for proper export from peroxisomes and recycling. When PEX5 recycling is compromised, polyubiquitinated at Lys-22 by PEX10 during its passage through the retrotranslocation channel, leading to its degradation.

It localises to the cytoplasm. The protein resides in the cytosol. The protein localises to the peroxisome matrix. Receptor that mediates peroxisomal import of proteins containing a C-terminal PTS1-type tripeptide peroxisomal targeting signal (SKL-type). Binds to cargo proteins containing a PTS1 peroxisomal targeting signal in the cytosol, and translocates them into the peroxisome matrix by passing through the PEX13-PEX14 docking complex along with cargo proteins. PEX5 receptor is then retrotranslocated into the cytosol, leading to release of bound cargo in the peroxisome matrix, and reset for a subsequent peroxisome import cycle. This Candida albicans (strain SC5314 / ATCC MYA-2876) (Yeast) protein is Peroxisomal targeting signal receptor (PEX5).